Here is a 391-residue protein sequence, read N- to C-terminus: Elongation factor Tu 1 (391 aa).

A tr-type G domain is found at 10 to 201; the sequence is KPHVNIGTIG…EVDNYIPTPE (192 aa). The tract at residues 19 to 26 is G1; the sequence is GHVDHGKT. 19–26 contributes to the GTP binding site; the sequence is GHVDHGKT. T26 provides a ligand contact to Mg(2+). Residues 55-59 form a G2 region; it reads GITIS. Positions 76-79 are G3; the sequence is DCPG. Residues 76 to 80 and 131 to 134 each bind GTP; these read DCPGH and NKVD. The tract at residues 131–134 is G4; the sequence is NKVD. A G5 region spans residues 169-171; that stretch reads SAL.

This sequence belongs to the TRAFAC class translation factor GTPase superfamily. Classic translation factor GTPase family. EF-Tu/EF-1A subfamily. As to quaternary structure, monomer.

It is found in the cytoplasm. It carries out the reaction GTP + H2O = GDP + phosphate + H(+). Its function is as follows. GTP hydrolase that promotes the GTP-dependent binding of aminoacyl-tRNA to the A-site of ribosomes during protein biosynthesis. This is Elongation factor Tu 1 from Bartonella quintana (strain Toulouse) (Rochalimaea quintana).